We begin with the raw amino-acid sequence, 665 residues long: Pentatricopeptide repeat-containing protein At3g02490, mitochondrial (665 aa).

The N-terminal 37 residues, 1-37 (MRYQWRSLLFRSYRSSPRPFLSHHSRFQVISNSTRSF), are a transit peptide targeting the mitochondrion. PPR repeat units follow at residues 280–314 (DEKT…GYEM), 315–349 (EMET…SISN), 352–388 (TPHC…GNVV), 389–423 (PDVM…GYVP), 424–458 (SGDL…GNHL), 459–493 (DDKA…EGVS), 495–530 (AGYA…QLKP), and 536–570 (KIMV…GFPP).

Belongs to the PPR family. P subfamily.

The protein resides in the mitochondrion. The polypeptide is Pentatricopeptide repeat-containing protein At3g02490, mitochondrial (Arabidopsis thaliana (Mouse-ear cress)).